Reading from the N-terminus, the 387-residue chain is Queuine tRNA-ribosyltransferase (387 aa).

Asp93 serves as the catalytic Proton acceptor. Substrate contacts are provided by residues 93–97 (DSGGF), Asp147, Gln190, and Gly217. The interval 248 to 254 (GVGTPDD) is RNA binding. Catalysis depends on Asp267, which acts as the Nucleophile. The RNA binding; important for wobble base 34 recognition stretch occupies residues 272–276 (TRAGR). Zn(2+) is bound by residues Cys305, Cys307, Cys310, and His336.

This sequence belongs to the queuine tRNA-ribosyltransferase family. Homodimer. Within each dimer, one monomer is responsible for RNA recognition and catalysis, while the other monomer binds to the replacement base PreQ1. Zn(2+) serves as cofactor.

It catalyses the reaction 7-aminomethyl-7-carbaguanine + guanosine(34) in tRNA = 7-aminomethyl-7-carbaguanosine(34) in tRNA + guanine. The protein operates within tRNA modification; tRNA-queuosine biosynthesis. Functionally, catalyzes the base-exchange of a guanine (G) residue with the queuine precursor 7-aminomethyl-7-deazaguanine (PreQ1) at position 34 (anticodon wobble position) in tRNAs with GU(N) anticodons (tRNA-Asp, -Asn, -His and -Tyr). Catalysis occurs through a double-displacement mechanism. The nucleophile active site attacks the C1' of nucleotide 34 to detach the guanine base from the RNA, forming a covalent enzyme-RNA intermediate. The proton acceptor active site deprotonates the incoming PreQ1, allowing a nucleophilic attack on the C1' of the ribose to form the product. After dissociation, two additional enzymatic reactions on the tRNA convert PreQ1 to queuine (Q), resulting in the hypermodified nucleoside queuosine (7-(((4,5-cis-dihydroxy-2-cyclopenten-1-yl)amino)methyl)-7-deazaguanosine). In Gluconacetobacter diazotrophicus (strain ATCC 49037 / DSM 5601 / CCUG 37298 / CIP 103539 / LMG 7603 / PAl5), this protein is Queuine tRNA-ribosyltransferase.